Consider the following 196-residue polypeptide: MHPLSIEGAWSQEPVIHSDHRGRSHEWFRGERFRQTFGHDFPVAQVNVAVSHRGALRGIHYTEIPPGQAKYSVCVRGAGLDVIVDVRIGSPTFGRWEIVPMDAERNTAVYLAAGLGRAFLSLTDDATLVYLCSSGYAPEREHSVNPLDPDLGIVWPADIEPLLSDRDKNAPTLATAERLGLLPTYQAWQEQQQAKA.

Substrate is bound by residues Arg-21, Glu-26, 45 to 47, and Arg-57; that span reads QVN. Catalysis depends on His-60, which acts as the Proton acceptor. 2 residues coordinate substrate: Lys-70 and Arg-117. Tyr-130 acts as the Proton donor in catalysis. 2 residues coordinate substrate: Glu-141 and Arg-166.

This sequence belongs to the dTDP-4-dehydrorhamnose 3,5-epimerase family. As to quaternary structure, homodimer.

It carries out the reaction dTDP-4-dehydro-6-deoxy-alpha-D-glucose = dTDP-4-dehydro-6-deoxy-alpha-D-allose. It functions in the pathway antibiotic biosynthesis. In terms of biological role, involved in the biosynthesis of dTDP-6-deoxy-D-allose, an intermediate in the biosynthesis of mycinose, which is one of the two unusual sugars attached to the 16-membered macrolactone ring of the aglycone antibiotic dihydrochalcomycin (GERI-155). Catalyzes the conversion of dTDP-4-oxo-6-deoxyglucose to dTDP-4-oxo-6-deoxyallose, via a C-3 epimerization. This Streptomyces sp protein is dTDP-4-dehydro-6-deoxyglucose 3-epimerase.